A 188-amino-acid chain; its full sequence is Elongation factor P-like protein (188 aa).

It belongs to the elongation factor P family.

The sequence is that of Elongation factor P-like protein from Aliivibrio fischeri (strain ATCC 700601 / ES114) (Vibrio fischeri).